Reading from the N-terminus, the 254-residue chain is D-aminoacyl-tRNA deacylase (254 aa).

The interval 61-85 (KPTLTVHTPGNLTEDNSRGGNSEEI) is disordered. The span at 65-84 (TVHTPGNLTEDNSRGGNSEE) shows a compositional bias: polar residues.

Belongs to the DtdA deacylase family. In terms of assembly, monomer. The cofactor is Zn(2+).

It catalyses the reaction a D-aminoacyl-tRNA + H2O = a tRNA + a D-alpha-amino acid + H(+). The enzyme catalyses glycyl-tRNA(Ala) + H2O = tRNA(Ala) + glycine + H(+). Functionally, D-aminoacyl-tRNA deacylase with broad substrate specificity. By recycling D-aminoacyl-tRNA to D-amino acids and free tRNA molecules, this enzyme counteracts the toxicity associated with the formation of D-aminoacyl-tRNA entities in vivo. This is D-aminoacyl-tRNA deacylase from Methanococcus maripaludis (strain C5 / ATCC BAA-1333).